The primary structure comprises 344 residues: BURP domain-containing protein 16 (344 aa).

The first 25 residues, 1–25, serve as a signal peptide directing secretion; sequence MATSFLFSLILLLITALSLPFPLHA. Residues N90, N120, N181, and N333 are each glycosylated (N-linked (GlcNAc...) asparagine). One can recognise a BURP domain in the interval 128–341; it reads FFREQELKEG…FNGSMTWVIA (214 aa).

Expressed in roots, stems, leaves and panicles.

The protein is BURP domain-containing protein 16 (BURP16) of Oryza sativa subsp. japonica (Rice).